Reading from the N-terminus, the 335-residue chain is Glycerol-3-phosphate dehydrogenase [NAD(P)+] (335 aa).

The NADPH site is built by serine 10, phenylalanine 11, arginine 31, and lysine 105. Sn-glycerol 3-phosphate-binding residues include lysine 105, glycine 136, and serine 138. Alanine 140 lines the NADPH pocket. Lysine 191, aspartate 244, serine 254, arginine 255, and asparagine 256 together coordinate sn-glycerol 3-phosphate. Lysine 191 serves as the catalytic Proton acceptor. Arginine 255 contacts NADPH. Residues valine 279 and glutamate 281 each coordinate NADPH.

It belongs to the NAD-dependent glycerol-3-phosphate dehydrogenase family.

It is found in the cytoplasm. It carries out the reaction sn-glycerol 3-phosphate + NAD(+) = dihydroxyacetone phosphate + NADH + H(+). The catalysed reaction is sn-glycerol 3-phosphate + NADP(+) = dihydroxyacetone phosphate + NADPH + H(+). It functions in the pathway membrane lipid metabolism; glycerophospholipid metabolism. Functionally, catalyzes the reduction of the glycolytic intermediate dihydroxyacetone phosphate (DHAP) to sn-glycerol 3-phosphate (G3P), the key precursor for phospholipid synthesis. This chain is Glycerol-3-phosphate dehydrogenase [NAD(P)+], found in Leptospira borgpetersenii serovar Hardjo-bovis (strain JB197).